An 867-amino-acid polypeptide reads, in one-letter code: Bifunctional isopimaradiene synthase, chloroplastic (867 aa).

A chloroplast-targeting transit peptide spans 1–68 (MALLSSSLSS…VGEGTTSLPY (68 aa)). Lys267 contacts substrate. The Mg(2+) site is built by Asp400 and Asp402. A DXDD motif motif is present at residues 400 to 403 (DIDD). Lys487 serves as a coordination point for substrate. Mg(2+)-binding residues include Asp619, Asp623, Asn763, Thr767, and Glu771. Residues 619 to 623 (DDLYD) carry the DDXXD motif motif.

This sequence belongs to the terpene synthase family. Tpsd subfamily. Requires Mg(2+) as cofactor.

The protein resides in the plastid. The protein localises to the chloroplast. It catalyses the reaction (2E,6E,10E)-geranylgeranyl diphosphate = (+)-copalyl diphosphate. It carries out the reaction (+)-copalyl diphosphate = isopimara-7,15-diene + diphosphate. It participates in terpene metabolism; oleoresin biosynthesis. Its function is as follows. Involved in defensive oleoresin formation in conifers in response to insect attack or other injury. Involved in diterpene (C20) olefins biosynthesis. Bifunctional enzyme that catalyzes two sequential cyclizations of geranylgeranyl diphosphate (GGPP) to isopimara-7,15-diene. This Picea abies (Norway spruce) protein is Bifunctional isopimaradiene synthase, chloroplastic (TPS-ISO).